We begin with the raw amino-acid sequence, 122 residues long: Large ribosomal subunit protein uL14 (122 aa).

This sequence belongs to the universal ribosomal protein uL14 family. In terms of assembly, part of the 50S ribosomal subunit. Forms a cluster with proteins L3 and L19. In the 70S ribosome, L14 and L19 interact and together make contacts with the 16S rRNA in bridges B5 and B8.

Its function is as follows. Binds to 23S rRNA. Forms part of two intersubunit bridges in the 70S ribosome. The polypeptide is Large ribosomal subunit protein uL14 (Rhodococcus jostii (strain RHA1)).